Here is a 480-residue protein sequence, read N- to C-terminus: ATP synthase subunit beta (480 aa).

Residue 153-160 participates in ATP binding; that stretch reads GGAGVGKT.

It belongs to the ATPase alpha/beta chains family. In terms of assembly, F-type ATPases have 2 components, CF(1) - the catalytic core - and CF(0) - the membrane proton channel. CF(1) has five subunits: alpha(3), beta(3), gamma(1), delta(1), epsilon(1). CF(0) has three main subunits: a(1), b(2) and c(9-12). The alpha and beta chains form an alternating ring which encloses part of the gamma chain. CF(1) is attached to CF(0) by a central stalk formed by the gamma and epsilon chains, while a peripheral stalk is formed by the delta and b chains.

It is found in the cell membrane. It carries out the reaction ATP + H2O + 4 H(+)(in) = ADP + phosphate + 5 H(+)(out). In terms of biological role, produces ATP from ADP in the presence of a proton gradient across the membrane. The catalytic sites are hosted primarily by the beta subunits. In Lactobacillus gasseri (strain ATCC 33323 / DSM 20243 / BCRC 14619 / CIP 102991 / JCM 1131 / KCTC 3163 / NCIMB 11718 / NCTC 13722 / AM63), this protein is ATP synthase subunit beta.